Here is a 489-residue protein sequence, read N- to C-terminus: ERO1-like protein alpha (489 aa).

Residues 1–20 (METCVLLLGLFLTSVHVTTA) form the signal peptide. Cystine bridges form between C27-C40, C29-C38, C77-C382, C86-C91, C86-C123, C91-C96, C200-C232, and C385-C388. R179, T181, and W192 together coordinate FAD. FAD is bound by residues S243 and H246. A glycan (N-linked (GlcNAc...) asparagine) is linked at N271. Residues R278 and R291 each contribute to the FAD site. An N-linked (GlcNAc...) asparagine glycan is attached at N375.

It belongs to the EROs family. As to quaternary structure, predominantly monomer. May function both as a monomer and a homodimer. Requires FAD as cofactor. Post-translationally, the Cys-86/Cys-91 and Cys-385/Cys-388 disulfide bonds constitute the redox-active center. The Cys-86/Cys-91 disulfide bond may accept electron from protein disulfide isomerase (PDI) and funnel them to the active site disulfide Cys-385/Cys-388.

Its subcellular location is the endoplasmic reticulum membrane. With respect to regulation, enzyme activity is tightly regulated to prevent the accumulation of reactive oxygen species in the endoplasmic reticulum. Reversibly down-regulated by the formation of disulfide bonds between the active site Cys-86 and Cys-123, and between Cys-91 and Cys-96. Glutathione may be required to regulate its activity in the endoplasmic reticulum. In terms of biological role, oxidoreductase involved in disulfide bond formation in the endoplasmic reticulum. Efficiently reoxidizes P4HB/PDI, the enzyme catalyzing protein disulfide formation, in order to allow P4HB to sustain additional rounds of disulfide formation. Following P4HB reoxidation, passes its electrons to molecular oxygen via FAD, leading to the production of reactive oxygen species (ROS) in the cell. Required for the folding of immunoglobulins. The sequence is that of ERO1-like protein alpha from Danio rerio (Zebrafish).